Here is a 436-residue protein sequence, read N- to C-terminus: Histone acetyltransferase RTT109 (436 aa).

The 403-residue stretch at 2 to 404 (SLNDFLSSVL…LQSLTGKREH (403 aa)) folds into the Rtt109-type HAT domain. Residues 88 to 90 (ADT) and 97 to 101 (RVSVR) contribute to the acetyl-CoA site. The interaction with VPS75 stretch occupies residues 128-170 (RSYKKISPELISAASTPARTLRILARRLKQSGSTVLKEIESPR). Acetyl-CoA-binding positions include Phe-192, Ala-196, 211–213 (HIL), and Trp-221. Catalysis depends on Asp-288, which acts as the Proton donor/acceptor. Lys-290 is modified (N6-acetyllysine; by autocatalysis). An interaction with ASF1 region spans residues 419 to 433 (LAITMLKPRKKAKAL).

This sequence belongs to the RTT109 family. In terms of assembly, forms a complex composed of two RTT109 subunits and one VPS75 homodimer; each RTT109 subunit interacts predominantly with VPS75 instead of interacting with the other RTT109 subunit. Interacts with VPS75; the interaction is direct. Interacts (via C-terminus) with ASF1; the interaction is direct. Interacts with histone H3/H4 heterodimers via histone H3.

It localises to the nucleus. It catalyses the reaction L-lysyl-[histone] + acetyl-CoA = N(6)-acetyl-L-lysyl-[histone] + CoA + H(+). It carries out the reaction L-lysyl-[protein] + acetyl-CoA = N(6)-acetyl-L-lysyl-[protein] + CoA + H(+). Histone chaperone-dependent acetylase that modifies 'Lys-9', 'Lys-14', 'Lys-23', 'Lys-27', and 'Lys-56' on histone H3 (H3K9Ac, H3K14Ac and H3K23Ac, H3K27Ac, and H3K56Ac) to promote nucleosome assembly, genomic stability, DNA repair and transcriptional regulation during mitotic S-phase. Its residue selectivity is influenced by the acetylation status of histone H3, and also the presence of histone chaperone ASF1 that shifts selectivity to 'Lys-56' when H3K14Ac is already present. H3K56 acetylation weakens the interaction between the histone core and the surrounding DNA in the nucleosomal particle and drives chromatin disassembly. Autoacetylates. Independently of acetyltransferase activity, stimulates histone deposition by VPS75. Involved in regulation of Ty1 transposition. This Saccharomyces cerevisiae (strain ATCC 204508 / S288c) (Baker's yeast) protein is Histone acetyltransferase RTT109.